We begin with the raw amino-acid sequence, 432 residues long: MRVLVLGSGVIGTASAYYLARQGHEVVVVDRQNGPALETSFANAGQVSPGYASPWAAPGVPLKAIKWLLQKHAPLAIKATGDVDQYLWMAQMLRNCTAARYAVNKERMVRLSEYSRDCLDELRAETGIAYEGRQLGTTQLFRTQAQVDAAAKDIAVLEASGVPFELLDRDAIARVEPALAGVKHKLAGALRLPNDQTGDCQMFTTKLADMAKALGVEFRFGQNIQRLDAVGDRLNGVWIDGKLETADRYVLALGSYSPQLLKPLGVRAPVYPLKGYSLTVPITNAEMAPTSTILDETYKVAITRFDNRIRVGGMAEIAGFDLSLNPRRRETLEMITADLYPQGGDLSQAEFWTGLRPATPDGTPIVGATAYRNLFLNTGHGTLGWTMACGSGRLLADLIGSKRPQISAEGLDISRYSGKNRELEAAPQPLRT.

Position 3–17 (3–17 (VLVLGSGVIGTASAY)) interacts with FAD.

Belongs to the DadA oxidoreductase family. It depends on FAD as a cofactor.

It carries out the reaction a D-alpha-amino acid + A + H2O = a 2-oxocarboxylate + AH2 + NH4(+). Its pathway is amino-acid degradation; D-alanine degradation; NH(3) and pyruvate from D-alanine: step 1/1. Functionally, oxidative deamination of D-amino acids. In Ectopseudomonas mendocina (strain ymp) (Pseudomonas mendocina), this protein is D-amino acid dehydrogenase.